The primary structure comprises 124 residues: Large ribosomal subunit protein bL20c (124 aa).

Belongs to the bacterial ribosomal protein bL20 family.

It localises to the plastid. It is found in the chloroplast. In terms of biological role, binds directly to 23S ribosomal RNA and is necessary for the in vitro assembly process of the 50S ribosomal subunit. It is not involved in the protein synthesizing functions of that subunit. This chain is Large ribosomal subunit protein bL20c, found in Stigeoclonium helveticum (Green alga).